We begin with the raw amino-acid sequence, 245 residues long: 2,3-bisphosphoglycerate-dependent phosphoglycerate mutase (245 aa).

Substrate-binding positions include 8 to 15 (RHGQSLWN), 21 to 22 (TG), arginine 60, 87 to 90 (ERHY), lysine 98, 114 to 115 (RR), and 183 to 184 (GN). The Tele-phosphohistidine intermediate role is filled by histidine 9. The active-site Proton donor/acceptor is the glutamate 87.

This sequence belongs to the phosphoglycerate mutase family. BPG-dependent PGAM subfamily.

It carries out the reaction (2R)-2-phosphoglycerate = (2R)-3-phosphoglycerate. The protein operates within carbohydrate degradation; glycolysis; pyruvate from D-glyceraldehyde 3-phosphate: step 3/5. In terms of biological role, catalyzes the interconversion of 2-phosphoglycerate and 3-phosphoglycerate. The chain is 2,3-bisphosphoglycerate-dependent phosphoglycerate mutase from Bacillus cereus (strain B4264).